Here is a 1093-residue protein sequence, read N- to C-terminus: Semaphorin 5c (1093 aa).

Positions 1–34 are cleaved as a signal peptide; the sequence is MNMLILKLPKMFSQLWLLLILSLLTLEGPQPSTG. N-linked (GlcNAc...) asparagine glycosylation is present at Asn48. The region spanning 50–495 is the Sema domain; that stretch reads SRYISYQDLM…TDLALTRIPA (446 aa). Cystine bridges form between Cys118–Cys128 and Cys146–Cys155. N-linked (GlcNAc...) asparagine glycosylation is found at Asn162, Asn182, Asn285, and Asn295. 2 cysteine pairs are disulfide-bonded: Cys271–Cys376 and Cys296–Cys338. Asn341 carries N-linked (GlcNAc...) asparagine glycosylation. In terms of domain architecture, PSI spans 497 to 546; the sequence is HCSRHVSQSSCLNSMDPYCGWNELVERCMPQPQDSSVLQHWHQAPQITCP. TSP type-1 domains lie at 553–605, 607–663, and 671–726; these read DGGW…TNCT, HGGW…PPCP, and DGGW…QSCQ. A glycan (N-linked (GlcNAc...) asparagine) is linked at Asn603. Intrachain disulfides connect Cys619–Cys656, Cys623–Cys662, Cys634–Cys646, Cys683–Cys720, Cys687–Cys725, and Cys698–Cys710. Residue Asn745 is glycosylated (N-linked (GlcNAc...) asparagine). 3 consecutive TSP type-1 domains span residues 794–834, 850–901, and 904–953; these read DSAD…HACP, HGEW…VPCE, and LGWS…NECE. 3 disulfide bridges follow: Cys862-Cys895, Cys866-Cys900, and Cys877-Cys885. A helical membrane pass occupies residues 960 to 980; the sequence is TATLPIVIFVGLLFTVACCLA. N-linked (GlcNAc...) asparagine glycosylation is found at Asn998 and Asn1046. The tract at residues 1018 to 1056 is disordered; it reads PTKDYYDQRPKRQSSFRMPAKTSNLGNGNGTLNRNNMHQ. A compositionally biased stretch (low complexity) spans 1041–1053; that stretch reads NLGNGNGTLNRNN.

Belongs to the semaphorin family. As to expression, in egg chambers, high levels of expression in the follicle cells, with little to no expression in the germ cells (at protein level). In stage 3 to 7 egg chambers, planar polarized at the basal epithelial surface (at protein level).

It is found in the apical cell membrane. The protein resides in the lateral cell membrane. The protein localises to the endosome. Functionally, regulates the motility of migrating epithelial cells by providing guidance cues within the migratory environment and may also play a role in development of the olfactory system. May act as a positive axonal guidance cue. Function in neurons is essential for adult survival and is important for climbing behavior. Promotes collective migration of follicular epithelial cells in egg chambers, likely by acting at the leading edge of the basal epithelium cells to provide guidance cues across the cell boundary to the trailing edge of the cell ahead. The transmembrane receptor PlexA on the trailing edge of the cell ahead, appears to transduce this signal to suppress the formation of protrusions. Involved in olfactory avoidance behavior. In Drosophila melanogaster (Fruit fly), this protein is Semaphorin 5c.